The primary structure comprises 507 residues: Probable serine/threonine-protein kinase DDB_G0268078 (507 aa).

One can recognise a Protein kinase domain in the interval 4-286 (YQFIKQVGDG…PLQALQHRYF (283 aa)). Residues 10–18 (VGDGAYGDV) and Lys-33 each bind ATP. Residue Asp-125 is the Proton acceptor of the active site. Residues 323–347 (NYSNNNNNNNLNSNSENLNNVNKNN) show a composition bias toward low complexity. Disordered stretches follow at residues 323–364 (NYSN…PKNS), 381–404 (NVNNNNNNYNSNTTSGYYNQKLDS), and 428–507 (QQPP…NSKL). The segment covering 348-361 (QQPHSPQKIQTPKP) has biased composition (polar residues). Residues 381 to 399 (NVNNNNNNYNSNTTSGYYN) show a composition bias toward low complexity. Positions 429-450 (QPPPQSQPPQSQPPPQSQPPPI) are enriched in pro residues. Residues 451 to 470 (LTQQQQQQQQQQQQQQQLPS) show a composition bias toward low complexity. 2 stretches are compositionally biased toward polar residues: residues 471-481 (KTTIYHNTNHL) and 491-507 (RGISPQFYNETTNNSKL).

It belongs to the protein kinase superfamily. CMGC Ser/Thr protein kinase family. CDC2/CDKX subfamily.

It catalyses the reaction L-seryl-[protein] + ATP = O-phospho-L-seryl-[protein] + ADP + H(+). The enzyme catalyses L-threonyl-[protein] + ATP = O-phospho-L-threonyl-[protein] + ADP + H(+). The sequence is that of Probable serine/threonine-protein kinase DDB_G0268078 from Dictyostelium discoideum (Social amoeba).